Consider the following 331-residue polypeptide: Ribosomal large subunit pseudouridine synthase D (331 aa).

An S4 RNA-binding domain is found at 25 to 97 (RRFDAVLAEL…IPLDILYEDE (73 aa)). The active site involves Asp145.

The protein belongs to the pseudouridine synthase RluA family.

Its subcellular location is the cytoplasm. It carries out the reaction uridine(1911/1915/1917) in 23S rRNA = pseudouridine(1911/1915/1917) in 23S rRNA. Responsible for synthesis of pseudouridine from uracil at positions 1911, 1915 and 1917 in 23S ribosomal RNA. The sequence is that of Ribosomal large subunit pseudouridine synthase D (rluD) from Xylella fastidiosa (strain Temecula1 / ATCC 700964).